The primary structure comprises 394 residues: Envelope glycoprotein D (394 aa).

Positions 1-25 (MGGTAARLGAVILFVVIVGLHGVRG) are cleaved as a signal peptide. The interaction with TNFRSF14 stretch occupies residues 25 to 57 (GKYALADASLKMADPNRFRGKDLPVLDQLTDPP). Residues 26–339 (KYALADASLK…PYHPPATPNN (314 aa)) lie on the Virion surface side of the membrane. His-64 serves as a coordination point for Zn(2+). 3 cysteine pairs are disulfide-bonded: Cys-91-Cys-214, Cys-131-Cys-227, and Cys-143-Cys-152. N-linked (GlcNAc...) asparagine; by host glycans are attached at residues Asn-119 and Asn-146. Asp-240 contacts Zn(2+). The interval 261 to 305 (LKIAGWHGPKAPYTSTLLPPELSETPNATQPELAPEDPEDSALLE) is profusion. The disordered stretch occupies residues 275 to 301 (STLLPPELSETPNATQPELAPEDPEDS). Asn-287 carries an N-linked (GlcNAc...) asparagine; by host glycan. A helical transmembrane segment spans residues 340 to 364 (MGLIAGAVGGSLLAALVICGIVYWM). Topologically, residues 365-394 (HRRTRKAPKRIRLPHIREDDQPSSHQPLFY) are intravirion.

This sequence belongs to the herpesviridae glycoprotein D family. As to quaternary structure, homodimer. Interacts with host receptor TNFRSF14. Interacts with host receptor NECTIN1. Interacts (via profusion domain) with gB; this interaction occurs in the absence of gH/gL. Interacts (via profusion domain) with gH/gL heterodimer; this interaction occurs in the absence of gB. Associates with the gB-gH/gL-gD complex. Interacts (via C-terminus) with UL11 tegument protein. Interacts with host RSAD2.

It is found in the virion membrane. Its subcellular location is the host Golgi apparatus. Its function is as follows. Envelope glycoprotein that binds to the host cell entry receptors NECTIN1, TNFRSF14/HVEM and 3-O-sulfated heparan sulfate, promoting the virus entry into host cells. May trigger fusion with host membrane, by recruiting the fusion machinery composed of gB and gH/gL. This Human herpesvirus 1 (strain Patton) (HHV-1) protein is Envelope glycoprotein D (gD).